Reading from the N-terminus, the 372-residue chain is Lipoyl synthase, mitochondrial (372 aa).

Residues cysteine 106, cysteine 111, cysteine 117, cysteine 137, cysteine 141, cysteine 144, and serine 352 each coordinate [4Fe-4S] cluster. One can recognise a Radical SAM core domain in the interval 122-341 (EYGTATATIM…EKAGNELGFL (220 aa)).

It belongs to the radical SAM superfamily. Lipoyl synthase family. Requires [4Fe-4S] cluster as cofactor.

The protein resides in the mitochondrion. The enzyme catalyses [[Fe-S] cluster scaffold protein carrying a second [4Fe-4S](2+) cluster] + N(6)-octanoyl-L-lysyl-[protein] + 2 oxidized [2Fe-2S]-[ferredoxin] + 2 S-adenosyl-L-methionine + 4 H(+) = [[Fe-S] cluster scaffold protein] + N(6)-[(R)-dihydrolipoyl]-L-lysyl-[protein] + 4 Fe(3+) + 2 hydrogen sulfide + 2 5'-deoxyadenosine + 2 L-methionine + 2 reduced [2Fe-2S]-[ferredoxin]. It functions in the pathway protein modification; protein lipoylation via endogenous pathway; protein N(6)-(lipoyl)lysine from octanoyl-[acyl-carrier-protein]: step 2/2. In terms of biological role, catalyzes the radical-mediated insertion of two sulfur atoms into the C-6 and C-8 positions of the octanoyl moiety bound to the lipoyl domains of lipoate-dependent enzymes, thereby converting the octanoylated domains into lipoylated derivatives. This Xenopus laevis (African clawed frog) protein is Lipoyl synthase, mitochondrial (lias).